The following is a 20-amino-acid chain: Large ribosomal subunit protein uL10 (20 aa).

It belongs to the universal ribosomal protein uL10 family. In terms of assembly, part of the ribosomal stalk of the 50S ribosomal subunit. The N-terminus interacts with L11 and the large rRNA to form the base of the stalk. The C-terminus forms an elongated spine to which L12 dimers bind in a sequential fashion forming a multimeric L10(L12)X complex.

Functionally, forms part of the ribosomal stalk, playing a central role in the interaction of the ribosome with GTP-bound translation factors. The protein is Large ribosomal subunit protein uL10 (rplJ) of Citrobacter freundii.